Here is a 907-residue protein sequence, read N- to C-terminus: Alanine--tRNA ligase (907 aa).

4 residues coordinate Zn(2+): H581, H585, C683, and H687.

The protein belongs to the class-II aminoacyl-tRNA synthetase family. Zn(2+) serves as cofactor.

Its subcellular location is the cytoplasm. It catalyses the reaction tRNA(Ala) + L-alanine + ATP = L-alanyl-tRNA(Ala) + AMP + diphosphate. Catalyzes the attachment of alanine to tRNA(Ala) in a two-step reaction: alanine is first activated by ATP to form Ala-AMP and then transferred to the acceptor end of tRNA(Ala). Also edits incorrectly charged Ser-tRNA(Ala) and Gly-tRNA(Ala) via its editing domain. The chain is Alanine--tRNA ligase from Bdellovibrio bacteriovorus (strain ATCC 15356 / DSM 50701 / NCIMB 9529 / HD100).